Consider the following 123-residue polypeptide: Methanesulfonate monooxygenase ferredoxin subunit (123 aa).

The Rieske domain occupies 4-99; it reads TYLCDAADVA…LKEEDGKLLA (96 aa). Residues cysteine 43, histidine 45, cysteine 63, and histidine 66 each contribute to the [2Fe-2S] cluster site.

It belongs to the bacterial ring-hydroxylating dioxygenase ferredoxin component family. The MSA monooxygenase system consists of 4 proteins: the 2 subunits of the hydroxylase component (MsmA and MsmB), a ferredoxin (MsmC) and a ferredoxin reductase (MsmD). The ferredoxin component is dimeric. [2Fe-2S] cluster serves as cofactor.

The protein localises to the cytoplasm. The enzyme catalyses methanesulfonate + NADH + O2 = sulfite + formaldehyde + NAD(+) + H2O. Its activity is regulated as follows. MSAMO is inhibited by metal chelators (such as bathophenanthroline, bathocuprione, neocuprione, alpha-alpha-dipyridil and sodium EDTA) and by sodium azide, sodium arsenate and potassium cyanide. Methanesulfonate monooxygenase (MSAMO) mediates the primary degradation of methanesulfonic acid (MSA) to produce formaldehyd and inorganic sulfite by initial hydroxylation of the carbon atom prior to spontaneous cleavage of the unstable hydroxymethanesulfonic acid. MSAMO has a restricted substrate range that includes only the short-chain aliphatic sulfonates (methane- to butanesulfonate) and excludes all larger molecules, such as arylsulfonates and aromatic sulfonates. All MSAMO components are required for enzyme activity. The sequence is that of Methanesulfonate monooxygenase ferredoxin subunit from Methylosulfonomonas methylovora.